Here is a 518-residue protein sequence, read N- to C-terminus: Ribonuclease Y (518 aa).

A helical transmembrane segment spans residues 2–22 (GSIIISALLALVIGAVVGFFV). One can recognise a KH domain in the interval 208-271 (TVSVVNLPND…ETARIALDKL (64 aa)). The HD domain occupies 334 to 427 (VLKHSVEVAF…VAAADALSAA (94 aa)).

Belongs to the RNase Y family.

It is found in the cell membrane. Endoribonuclease that initiates mRNA decay. This chain is Ribonuclease Y, found in Geobacillus kaustophilus (strain HTA426).